The primary structure comprises 156 residues: Small ribosomal subunit protein uS7 (156 aa).

This sequence belongs to the universal ribosomal protein uS7 family. As to quaternary structure, part of the 30S ribosomal subunit. Contacts proteins S9 and S11.

Functionally, one of the primary rRNA binding proteins, it binds directly to 16S rRNA where it nucleates assembly of the head domain of the 30S subunit. Is located at the subunit interface close to the decoding center, probably blocks exit of the E-site tRNA. The sequence is that of Small ribosomal subunit protein uS7 from Streptococcus pneumoniae serotype 4 (strain ATCC BAA-334 / TIGR4).